A 149-amino-acid chain; its full sequence is Transcriptional repressor NrdR (149 aa).

A zinc finger lies at 3–34; it reads CPFCNADDTKVIDSRLVADGHQVRRRRECLVC. One can recognise an ATP-cone domain in the interval 49–139; the sequence is PRVIKSNGVR…VYRSFEDIRE (91 aa).

The protein belongs to the NrdR family. The cofactor is Zn(2+).

Functionally, negatively regulates transcription of bacterial ribonucleotide reductase nrd genes and operons by binding to NrdR-boxes. The protein is Transcriptional repressor NrdR of Tolumonas auensis (strain DSM 9187 / NBRC 110442 / TA 4).